Here is a 347-residue protein sequence, read N- to C-terminus: Protein NDL3 (347 aa).

It belongs to the NDRG family. In terms of assembly, interacts with the heterodimers formed by GB1 and GG1, or GB1 and GG2. Interacts with RGS1.

It localises to the cytoplasm. Involved in a signaling pathway that modulates root auxin transport and auxin gradients. Acts partially by positively regulating the auxin carrier PIN2 and AUX1. Acts, together with GB1 as positive regulator of meristem initiation and branching. GB1 and NDL3 positively regulate basipetal inflorescence auxin transport and modulate MAX2 expression in shoots, which regulates organ and lateral meristem formation by the establishment and maintenance of auxin gradients. The polypeptide is Protein NDL3 (Arabidopsis thaliana (Mouse-ear cress)).